Consider the following 285-residue polypeptide: Polyamine aminopropyltransferase (285 aa).

The 237-residue stretch at 5-241 folds into the PABS domain; the sequence is DTWFTEHFQA…GWWSVTLSSK (237 aa). An S-methyl-5'-thioadenosine-binding site is contributed by Q35. Spermidine contacts are provided by H66 and D90. S-methyl-5'-thioadenosine is bound by residues D110 and 141–142; that span reads DG. D160 serves as the catalytic Proton acceptor. 160 to 163 is a binding site for spermidine; that stretch reads DSTD. Position 167 (P167) interacts with S-methyl-5'-thioadenosine.

It belongs to the spermidine/spermine synthase family. In terms of assembly, homodimer or homotetramer.

The protein localises to the cytoplasm. It carries out the reaction S-adenosyl 3-(methylsulfanyl)propylamine + putrescine = S-methyl-5'-thioadenosine + spermidine + H(+). Its pathway is amine and polyamine biosynthesis; spermidine biosynthesis; spermidine from putrescine: step 1/1. Its function is as follows. Catalyzes the irreversible transfer of a propylamine group from the amino donor S-adenosylmethioninamine (decarboxy-AdoMet) to putrescine (1,4-diaminobutane) to yield spermidine. This chain is Polyamine aminopropyltransferase, found in Xylella fastidiosa (strain M12).